Here is a 272-residue protein sequence, read N- to C-terminus: Putative protein-disulfide oxidoreductase RP025 (272 aa).

An N-terminal signal peptide occupies residues 1–21; that stretch reads MRNIFIVLIFLFLSNCSEVKA. A Thioredoxin domain is found at 74–263; the sequence is DSREQKKPEI…ISKAVDKALD (190 aa). Cysteine 116 and cysteine 119 are joined by a disulfide.

Belongs to the thioredoxin family. DsbA subfamily.

It localises to the periplasm. In terms of biological role, may be required for disulfide bond formation in some proteins. The polypeptide is Putative protein-disulfide oxidoreductase RP025 (Rickettsia prowazekii (strain Madrid E)).